Consider the following 195-residue polypeptide: Imidazoleglycerol-phosphate dehydratase (195 aa).

Belongs to the imidazoleglycerol-phosphate dehydratase family.

It is found in the cytoplasm. It catalyses the reaction D-erythro-1-(imidazol-4-yl)glycerol 3-phosphate = 3-(imidazol-4-yl)-2-oxopropyl phosphate + H2O. It participates in amino-acid biosynthesis; L-histidine biosynthesis; L-histidine from 5-phospho-alpha-D-ribose 1-diphosphate: step 6/9. In Hydrogenovibrio crunogenus (strain DSM 25203 / XCL-2) (Thiomicrospira crunogena), this protein is Imidazoleglycerol-phosphate dehydratase.